The sequence spans 394 residues: Elongation factor Tu 2 (394 aa).

Residues 10–204 (KPHVNVGTIG…YLDTYIPEPE (195 aa)) enclose the tr-type G domain. Residues 19–26 (GHVDHGKT) form a G1 region. 19–26 (GHVDHGKT) contributes to the GTP binding site. Threonine 26 contributes to the Mg(2+) binding site. The interval 60 to 64 (GITIN) is G2. A G3 region spans residues 81 to 84 (DCPG). Residues 81-85 (DCPGH) and 136-139 (NKCD) contribute to the GTP site. The G4 stretch occupies residues 136-139 (NKCD). The G5 stretch occupies residues 174–176 (SAL).

Belongs to the TRAFAC class translation factor GTPase superfamily. Classic translation factor GTPase family. EF-Tu/EF-1A subfamily. Monomer.

Its subcellular location is the cytoplasm. It carries out the reaction GTP + H2O = GDP + phosphate + H(+). Functionally, GTP hydrolase that promotes the GTP-dependent binding of aminoacyl-tRNA to the A-site of ribosomes during protein biosynthesis. This Yersinia enterocolitica serotype O:8 / biotype 1B (strain NCTC 13174 / 8081) protein is Elongation factor Tu 2.